A 630-amino-acid chain; its full sequence is tRNA uridine 5-carboxymethylaminomethyl modification enzyme MnmG (630 aa).

15–20 is a binding site for FAD; that stretch reads GAGHAG. 276 to 290 is an NAD(+) binding site; it reads GPRYCPSIEDKIVRF.

It belongs to the MnmG family. In terms of assembly, homodimer. Heterotetramer of two MnmE and two MnmG subunits. It depends on FAD as a cofactor.

It localises to the cytoplasm. NAD-binding protein involved in the addition of a carboxymethylaminomethyl (cmnm) group at the wobble position (U34) of certain tRNAs, forming tRNA-cmnm(5)s(2)U34. The chain is tRNA uridine 5-carboxymethylaminomethyl modification enzyme MnmG from Latilactobacillus sakei subsp. sakei (strain 23K) (Lactobacillus sakei subsp. sakei).